The sequence spans 339 residues: Ketol-acid reductoisomerase (NADP(+)) (339 aa).

The KARI N-terminal Rossmann domain occupies 1–182; sequence MRVYYDRDAD…GGGRAGIIET (182 aa). Residues 24–27, R48, S51, S53, and 83–86 contribute to the NADP(+) site; these read YGSQ and DELQ. H108 is an active-site residue. G134 provides a ligand contact to NADP(+). A KARI C-terminal knotted domain is found at 183–328; the sequence is TFKEECETDL…ERLRAMMPWI (146 aa). Positions 191, 195, 227, and 231 each coordinate Mg(2+). Substrate is bound at residue S252.

It belongs to the ketol-acid reductoisomerase family. Requires Mg(2+) as cofactor.

The enzyme catalyses (2R)-2,3-dihydroxy-3-methylbutanoate + NADP(+) = (2S)-2-acetolactate + NADPH + H(+). It catalyses the reaction (2R,3R)-2,3-dihydroxy-3-methylpentanoate + NADP(+) = (S)-2-ethyl-2-hydroxy-3-oxobutanoate + NADPH + H(+). Its pathway is amino-acid biosynthesis; L-isoleucine biosynthesis; L-isoleucine from 2-oxobutanoate: step 2/4. The protein operates within amino-acid biosynthesis; L-valine biosynthesis; L-valine from pyruvate: step 2/4. Involved in the biosynthesis of branched-chain amino acids (BCAA). Catalyzes an alkyl-migration followed by a ketol-acid reduction of (S)-2-acetolactate (S2AL) to yield (R)-2,3-dihydroxy-isovalerate. In the isomerase reaction, S2AL is rearranged via a Mg-dependent methyl migration to produce 3-hydroxy-3-methyl-2-ketobutyrate (HMKB). In the reductase reaction, this 2-ketoacid undergoes a metal-dependent reduction by NADPH to yield (R)-2,3-dihydroxy-isovalerate. The sequence is that of Ketol-acid reductoisomerase (NADP(+)) from Methylobacterium nodulans (strain LMG 21967 / CNCM I-2342 / ORS 2060).